Here is a 159-residue protein sequence, read N- to C-terminus: Nascent polypeptide-associated complex subunit beta (159 aa).

Disordered regions lie at residues 1–39 (MDME…GMDD) and 124–159 (QSMQ…DKVE). The span at 23–32 (TPRRKVKNVH) shows a compositional bias: basic residues. Positions 36-101 (GMDDKKLQTS…GEDKELTELV (66 aa)) constitute an NAC-A/B domain. Acidic residues predominate over residues 136-153 (KDDEEDDDDIPDLVEGEN).

This sequence belongs to the NAC-beta family. In terms of assembly, part of the nascent polypeptide-associated complex (NAC), consisting of EGD2 and EGD1. NAC associates with ribosomes via EGD1.

The protein resides in the cytoplasm. The protein localises to the nucleus. Component of the nascent polypeptide-associated complex (NAC), a dynamic component of the ribosomal exit tunnel, protecting the emerging polypeptides from interaction with other cytoplasmic proteins to ensure appropriate nascent protein targeting. The NAC complex also promotes mitochondrial protein import by enhancing productive ribosome interactions with the outer mitochondrial membrane and blocks the inappropriate interaction of ribosomes translating non-secretory nascent polypeptides with translocation sites in the membrane of the endoplasmic reticulum. EGD1 may act as a transcription factor that exert a negative effect on the expression of several genes that are transcribed by RNA polymerase II. This is Nascent polypeptide-associated complex subunit beta (egd1) from Sclerotinia sclerotiorum (strain ATCC 18683 / 1980 / Ss-1) (White mold).